The primary structure comprises 164 residues: MAEETAEKPVVESFQLDHTKVKAPYVRYIDTETGPHGDVISNYDLRLTQPNKQAIPTGGLHTIEHTIAVLLRERIPGYIDCSPFGCRTGFHLLTWGTHPTEEVAKALKESLEFIAYKATWDDVPATTEKSCGNYRDHSLFTAKEWAKQILEEGISSDPFERKVV.

Residues histidine 61, histidine 65, and cysteine 131 each contribute to the Fe cation site.

Belongs to the LuxS family. Homodimer. Fe cation serves as cofactor.

The enzyme catalyses S-(5-deoxy-D-ribos-5-yl)-L-homocysteine = (S)-4,5-dihydroxypentane-2,3-dione + L-homocysteine. Functionally, involved in the synthesis of autoinducer 2 (AI-2) which is secreted by bacteria and is used to communicate both the cell density and the metabolic potential of the environment. The regulation of gene expression in response to changes in cell density is called quorum sensing. Catalyzes the transformation of S-ribosylhomocysteine (RHC) to homocysteine (HC) and 4,5-dihydroxy-2,3-pentadione (DPD). The chain is S-ribosylhomocysteine lyase from Bifidobacterium longum (strain DJO10A).